Here is a 549-residue protein sequence, read N- to C-terminus: NADH-quinone oxidoreductase subunit N (549 aa).

14 consecutive transmembrane segments (helical) span residues 26-46 (LSPLLVVFAAGVIGVIVEAFV), 57-77 (ALAMVAVGVAFVLTLVQVGAL), 96-116 (PSLFFQGVILALALASLLLIA), 148-168 (HTEVYPLVMFAVLGMQLFTAA), 171-191 (FLTMFIALEVMSLPLYLLCGL), 206-226 (YFLLGAFSSAFFLFGIAMVYG), 253-273 (LLIGIAMIGVGMLFKVGTVPF), 297-317 (LVAAFGAMLRVFYVAFGTTVA), 321-341 (PMLWVVAILTMVVAAVIAVTQ), 347-367 (LLAYSSVVHAGFILTAVVAAN), 375-395 (MFYLAAYGFTTVGAFAIVTLV), 421-441 (AASLGLFLLAFAGIPLTSGFI), 466-486 (SAVTAFFYVRIIVLMFFAEPA), and 496-516 (GILTGTTVGLGVAATLLLGIL).

It belongs to the complex I subunit 2 family. As to quaternary structure, NDH-1 is composed of 14 different subunits. Subunits NuoA, H, J, K, L, M, N constitute the membrane sector of the complex.

The protein localises to the cell membrane. The enzyme catalyses a quinone + NADH + 5 H(+)(in) = a quinol + NAD(+) + 4 H(+)(out). Its function is as follows. NDH-1 shuttles electrons from NADH, via FMN and iron-sulfur (Fe-S) centers, to quinones in the respiratory chain. The immediate electron acceptor for the enzyme in this species is believed to be a menaquinone. Couples the redox reaction to proton translocation (for every two electrons transferred, four hydrogen ions are translocated across the cytoplasmic membrane), and thus conserves the redox energy in a proton gradient. The protein is NADH-quinone oxidoreductase subunit N of Thermobifida fusca (strain YX).